Here is a 269-residue protein sequence, read N- to C-terminus: Sulfur carrier protein FdhD (269 aa).

The active-site Cysteine persulfide intermediate is cysteine 111.

This sequence belongs to the FdhD family.

The protein resides in the cytoplasm. Functionally, required for formate dehydrogenase (FDH) activity. Acts as a sulfur carrier protein that transfers sulfur from IscS to the molybdenum cofactor prior to its insertion into FDH. This is Sulfur carrier protein FdhD from Brucella melitensis biotype 1 (strain ATCC 23456 / CCUG 17765 / NCTC 10094 / 16M).